Here is a 599-residue protein sequence, read N- to C-terminus: Elongation factor 4 (599 aa).

The tr-type G domain occupies 5-187 (SHIRNFSIVA…SIVQNLPAPK (183 aa)). GTP-binding positions include 17–22 (DHGKST) and 134–137 (NKID).

The protein belongs to the TRAFAC class translation factor GTPase superfamily. Classic translation factor GTPase family. LepA subfamily.

It localises to the cell inner membrane. The catalysed reaction is GTP + H2O = GDP + phosphate + H(+). Required for accurate and efficient protein synthesis under certain stress conditions. May act as a fidelity factor of the translation reaction, by catalyzing a one-codon backward translocation of tRNAs on improperly translocated ribosomes. Back-translocation proceeds from a post-translocation (POST) complex to a pre-translocation (PRE) complex, thus giving elongation factor G a second chance to translocate the tRNAs correctly. Binds to ribosomes in a GTP-dependent manner. The protein is Elongation factor 4 of Roseobacter denitrificans (strain ATCC 33942 / OCh 114) (Erythrobacter sp. (strain OCh 114)).